The chain runs to 94 residues: MSLPITKIVVHCSATRNGKSIKQPGKNAAQVIDGWHKQRGFKRQLSSQRAFNPHLSSIVITLSLMWTAQSEPVAKWAKLVHTLRGTTKIQWGFA.

This is an uncharacterized protein from Haemophilus influenzae (strain ATCC 51907 / DSM 11121 / KW20 / Rd).